The primary structure comprises 96 residues: Large ribosomal subunit protein eL14 (96 aa).

This sequence belongs to the eukaryotic ribosomal protein eL14 family.

The polypeptide is Large ribosomal subunit protein eL14 (Saccharolobus solfataricus (strain ATCC 35092 / DSM 1617 / JCM 11322 / P2) (Sulfolobus solfataricus)).